The primary structure comprises 882 residues: Translation initiation factor IF-2 (882 aa).

Disordered stretches follow at residues 95–176 (PSVT…ASSL) and 229–289 (EHAR…SALQ). Polar residues predominate over residues 116–133 (TKNTFSQESLNKTSPQKS). Composition is skewed to basic and acidic residues over residues 137 to 172 (KAIEKAKIESPKKERHSLKEKQKKEAQSEKARREAE) and 229 to 246 (EHARAAEDENDAKVEGDR). Residues 247–262 (RSRHRGTKTTKQKKTN) show a composition bias toward basic residues. Basic and acidic residues predominate over residues 263-276 (KLSESKTDREEARA). Residues 382–551 (HRAPVVTIMG…LLQAEVLELK (170 aa)) form the tr-type G domain. Positions 391-398 (GHVDHGKT) are G1. 391–398 (GHVDHGKT) is a GTP binding site. Residues 416–420 (GITQH) form a G2 region. The interval 437–440 (DTPG) is G3. GTP-binding positions include 437–441 (DTPGH) and 491–494 (NKID). Residues 491 to 494 (NKID) are G4. Positions 527–529 (SAK) are G5.

The protein belongs to the TRAFAC class translation factor GTPase superfamily. Classic translation factor GTPase family. IF-2 subfamily.

It localises to the cytoplasm. In terms of biological role, one of the essential components for the initiation of protein synthesis. Protects formylmethionyl-tRNA from spontaneous hydrolysis and promotes its binding to the 30S ribosomal subunits. Also involved in the hydrolysis of GTP during the formation of the 70S ribosomal complex. This chain is Translation initiation factor IF-2, found in Hamiltonella defensa subsp. Acyrthosiphon pisum (strain 5AT).